The chain runs to 286 residues: Dolichyl-diphosphooligosaccharide--protein glycosyltransferase subunit SWP1 (286 aa).

Positions 1–19 are cleaved as a signal peptide; it reads MQFFKTLAALVSCISFVLA. Topologically, residues 20–194 are lumenal; that stretch reads YVAQDVHVSF…HAEPKRVAKP (175 aa). A helical transmembrane segment spans residues 195–215; sequence IAVIFVLIIFITILSLIVTWL. Topologically, residues 216-228 are cytoplasmic; it reads NSCAAAFNNIPTG. A helical membrane pass occupies residues 229–249; the sequence is VTAVYFLGFIATIVGFEVIFA. The Lumenal portion of the chain corresponds to 250 to 252; that stretch reads RYY. A helical membrane pass occupies residues 253-273; it reads LGTSIFETLFSSLYLGAPGLL. Topologically, residues 274-286 are cytoplasmic; it reads TSTKFLRSFGQTI.

This sequence belongs to the SWP1 family. Component of the oligosaccharyltransferase (OST) complex, which appears to exist in two assemblies comprising OST1, OST2, OST4, OST5, STT3, SWP1, WPB1, and either OST3 or OST6. OST assembly occurs through the formation of 3 subcomplexes. Subcomplex 1 contains OST1 and OST5, subcomplex 2 contains STT3, OST3, and OST4, and subcomplex 3 contains OST2, WBP1, and SWP1. Interacts with SEC61 and SSS1.

The protein localises to the endoplasmic reticulum membrane. Its pathway is protein modification; protein glycosylation. Functionally, subunit of the oligosaccharyl transferase (OST) complex that catalyzes the initial transfer of a defined glycan (Glc(3)Man(9)GlcNAc(2) in eukaryotes) from the lipid carrier dolichol-pyrophosphate to an asparagine residue within an Asn-X-Ser/Thr consensus motif in nascent polypeptide chains, the first step in protein N-glycosylation. N-glycosylation occurs cotranslationally and the complex associates with the Sec61 complex at the channel-forming translocon complex that mediates protein translocation across the endoplasmic reticulum (ER). All subunits are required for a maximal enzyme activity. The sequence is that of Dolichyl-diphosphooligosaccharide--protein glycosyltransferase subunit SWP1 (SWP1) from Saccharomyces cerevisiae (strain ATCC 204508 / S288c) (Baker's yeast).